The following is a 134-amino-acid chain: Ribosome-binding factor A (134 aa).

The protein belongs to the RbfA family. Monomer. Binds 30S ribosomal subunits, but not 50S ribosomal subunits or 70S ribosomes.

It localises to the cytoplasm. One of several proteins that assist in the late maturation steps of the functional core of the 30S ribosomal subunit. Associates with free 30S ribosomal subunits (but not with 30S subunits that are part of 70S ribosomes or polysomes). Required for efficient processing of 16S rRNA. May interact with the 5'-terminal helix region of 16S rRNA. The sequence is that of Ribosome-binding factor A from Psychrobacter arcticus (strain DSM 17307 / VKM B-2377 / 273-4).